A 217-amino-acid polypeptide reads, in one-letter code: Pyridoxine/pyridoxamine 5'-phosphate oxidase (217 aa).

Residues 13–16 and K71 contribute to the substrate site; that span reads RREY. Residues 66–71, 81–82, R87, K88, and Q110 each bind FMN; these read RIVLLK and YT. 3 residues coordinate substrate: Y128, R132, and S136. Residues 145 to 146 and W190 contribute to the FMN site; that span reads QS. 196–198 is a substrate binding site; it reads RLH. Residue R200 participates in FMN binding.

This sequence belongs to the pyridoxamine 5'-phosphate oxidase family. In terms of assembly, homodimer. FMN is required as a cofactor.

It carries out the reaction pyridoxamine 5'-phosphate + O2 + H2O = pyridoxal 5'-phosphate + H2O2 + NH4(+). The catalysed reaction is pyridoxine 5'-phosphate + O2 = pyridoxal 5'-phosphate + H2O2. Its pathway is cofactor metabolism; pyridoxal 5'-phosphate salvage; pyridoxal 5'-phosphate from pyridoxamine 5'-phosphate: step 1/1. It participates in cofactor metabolism; pyridoxal 5'-phosphate salvage; pyridoxal 5'-phosphate from pyridoxine 5'-phosphate: step 1/1. Its function is as follows. Catalyzes the oxidation of either pyridoxine 5'-phosphate (PNP) or pyridoxamine 5'-phosphate (PMP) into pyridoxal 5'-phosphate (PLP). The polypeptide is Pyridoxine/pyridoxamine 5'-phosphate oxidase (Photorhabdus laumondii subsp. laumondii (strain DSM 15139 / CIP 105565 / TT01) (Photorhabdus luminescens subsp. laumondii)).